The chain runs to 63 residues: Protein D-63 (63 aa).

As to quaternary structure, homodimer.

Functionally, this protein may be involved in virus assembly. In Saccharolobus solfataricus (Sulfolobus solfataricus), this protein is Protein D-63.